The sequence spans 746 residues: Polyphosphate kinase (746 aa).

Residues 1–17 are compositionally biased toward polar residues; it reads MRQPNTQAEAQHTQPSV. Positions 1-60 are disordered; it reads MRQPNTQAEAQHTQPSVGSIAAHRPNTVAATVSGLEPDIDADLDAYEESEESQDGGARLP. Over residues 37–53 the composition is skewed to acidic residues; it reads PDIDADLDAYEESEESQ. N102 contributes to the ATP binding site. Residues R429 and R459 each coordinate Mg(2+). The Phosphohistidine intermediate role is filled by H489. 3 residues coordinate ATP: Y522, R618, and H646.

It belongs to the polyphosphate kinase 1 (PPK1) family. Mg(2+) is required as a cofactor. In terms of processing, an intermediate of this reaction is the autophosphorylated ppk in which a phosphate is covalently linked to a histidine residue through a N-P bond.

It carries out the reaction [phosphate](n) + ATP = [phosphate](n+1) + ADP. Functionally, catalyzes the reversible transfer of the terminal phosphate of ATP to form a long-chain polyphosphate (polyP). The polypeptide is Polyphosphate kinase (Streptomyces coelicolor (strain ATCC BAA-471 / A3(2) / M145)).